Reading from the N-terminus, the 385-residue chain is Exopolygalacturonase rpg15 (385 aa).

Positions 1 to 26 (MVRFISFTSPIAALLLLSFGVKHAST) are cleaved as a signal peptide. Residues Asn-143, Asn-161, Asn-164, and Asn-180 are each glycosylated (N-linked (GlcNAc...) asparagine). 4 PbH1 repeats span residues 165-195 (STNL…DLYH), 196-217 (SSGI…AIKE), 219-241 (VEKV…GSLG), and 249-270 (VKHV…RVKT). Residue Asp-210 is the Proton donor of the active site. The cysteines at positions 212 and 229 are disulfide-linked. Asn-226 is a glycosylation site (N-linked (GlcNAc...) asparagine). His-233 is an active-site residue. N-linked (GlcNAc...) asparagine glycosylation is found at Asn-256, Asn-319, and Asn-343. Cys-344 and Cys-350 form a disulfide bridge. One copy of the PbH1 5 repeat lies at 350–376 (CSDITFSGIDITKASNTTDNVCVYLEG). Asn-365 carries N-linked (GlcNAc...) asparagine glycosylation.

The protein belongs to the glycosyl hydrolase 28 family. In terms of processing, N-glycosylated.

Its subcellular location is the secreted. The catalysed reaction is [(1-&gt;4)-alpha-D-galacturonosyl](n) + H2O = alpha-D-galacturonate + [(1-&gt;4)-alpha-D-galacturonosyl](n-1). Specific in hydrolyzing the terminal glycosidic bond of polygalacturonic acid and oligogalacturonates. This is Exopolygalacturonase rpg15 from Rhizopus delemar (strain RA 99-880 / ATCC MYA-4621 / FGSC 9543 / NRRL 43880) (Mucormycosis agent).